A 94-amino-acid polypeptide reads, in one-letter code: Fungal defensin scedosporisin-2 (94 aa).

Positions 1–25 are cleaved as a signal peptide; it reads MKFSNISIAALFTILASTAMAAPAA. Residues 26 to 56 constitute a propeptide that is removed on maturation; that stretch reads DSPDSIVAREPAPVEETYEAPSGLEKRGFGC. Positions 54, 55, and 56 each coordinate beta-D-GlcNAc-(1-&gt;4)-Mur2Ac(oyl-L-Ala-gamma-D-Glu-L-Lys-D-Ala-D-Ala)-di-trans,octa-cis-undecaprenyl diphosphate. 3 disulfides stabilise this stretch: C56/C78, C63/C91, and C67/C93. The segment at 57–60 is interaction site with membrane interface; the sequence is PGSE. Residue H66 participates in beta-D-GlcNAc-(1-&gt;4)-Mur2Ac(oyl-L-Ala-gamma-D-Glu-L-Lys-D-Ala-D-Ala)-di-trans,octa-cis-undecaprenyl diphosphate binding. The interval 83–90 is interaction site with membrane interface; it reads IPFVGRPR. C91 contributes to the beta-D-GlcNAc-(1-&gt;4)-Mur2Ac(oyl-L-Ala-gamma-D-Glu-L-Lys-D-Ala-D-Ala)-di-trans,octa-cis-undecaprenyl diphosphate binding site.

It belongs to the invertebrate defensin family.

Its subcellular location is the secreted. The protein resides in the target cell membrane. Antibacterial peptide potently active against Gram-positive bacteria. May act by selectively inhibiting peptidoglycan biosynthesis through complex formation with the cell wall precursor lipid II (1:1 molar ratio) thus inhibiting cell wall synthesis. Shows remarkably activity against resistant isolates such as methicillin-resistant Staphylococcus aureus (MRSA) and vancomycin-resistant Enterococci (VRE) at the concentration of micromolar level. Does not act by destroying the membrane integrity, which is consistent with its nonamphiphilic architecture. Acts more rapidly than vancomycin. Shows low hemolysis and cytotoxicity and high serum stability. In vivo, is as efficient as vancomycin to protect mouse peritonitis models from MRSA infections. This is Fungal defensin scedosporisin-2 from Pseudallescheria apiosperma (Scedosporium apiospermum).